The sequence spans 332 residues: Ribosomal RNA small subunit methyltransferase C (332 aa).

This sequence belongs to the methyltransferase superfamily. RsmC family. Monomer.

It localises to the cytoplasm. The catalysed reaction is guanosine(1207) in 16S rRNA + S-adenosyl-L-methionine = N(2)-methylguanosine(1207) in 16S rRNA + S-adenosyl-L-homocysteine + H(+). In terms of biological role, specifically methylates the guanine in position 1207 of 16S rRNA in the 30S particle. In Pseudomonas aeruginosa (strain UCBPP-PA14), this protein is Ribosomal RNA small subunit methyltransferase C.